A 341-amino-acid chain; its full sequence is Krueppel-like factor 17 (341 aa).

A disordered region spans residues 214–252; the sequence is VTESNTQEEPFVREPPTPAPEGAESPSTSRGATRRQSPV. Residues 238 to 252 are compositionally biased toward polar residues; it reads SPSTSRGATRRQSPV. 3 C2H2-type zinc fingers span residues 256 to 280, 286 to 310, and 316 to 338; these read YVCT…QRKH, FACD…KRIH, and HKCD…KRTH.

This sequence belongs to the Sp1 C2H2-type zinc-finger protein family. Exclusively expressed in testis and ovary. Localized to step 3-8 spermatids in testis and growing oocytes in ovary.

It is found in the nucleus. In terms of biological role, transcription repressor that binds to the promoter of target genes and prevents their expression. Acts as a negative regulator of epithelial-mesenchymal transition and metastasis in breast cancer. Specifically binds the 5'-CACCC-3' sequence in the promoter of ID1, a key metastasis regulator in breast cancer, and repress its expression. May be a germ cell-specific transcription factor that plays important roles in spermatid differentiation and oocyte development. The polypeptide is Krueppel-like factor 17 (Klf17) (Mus musculus (Mouse)).